We begin with the raw amino-acid sequence, 563 residues long: Tripeptidyl-peptidase 1 (563 aa).

Positions 1–19 (MRLRTCLLGLLALCVASKC) are cleaved as a signal peptide. Residues 20-195 (SYSPEPDQQR…PEPQVSGTVG (176 aa)) constitute a propeptide, removed in mature form. A disulfide bridge links Cys-111 with Cys-122. Residues 199 to 563 (GVTPSVIRQR…PALLKALIKP (365 aa)) enclose the Peptidase S53 domain. Residues Asn-210 and Asn-222 are each glycosylated (N-linked (GlcNAc...) asparagine). Catalysis depends on charge relay system residues Glu-272 and Asp-276. Asn-286, Asn-313, and Asn-443 each carry an N-linked (GlcNAc...) asparagine glycan. Intrachain disulfides connect Cys-365-Cys-526 and Cys-522-Cys-537. Residue Ser-475 is the Charge relay system of the active site. Residues Asp-517 and Val-518 each contribute to the Ca(2+) site. Residues Gly-539, Gly-541, and Asp-543 each coordinate Ca(2+).

Monomer. Interacts with CLN5. Interacts with CLN3. Ca(2+) serves as cofactor. In terms of processing, activated by autocatalytic proteolytical processing upon acidification. N-glycosylation is required for processing and activity.

It is found in the lysosome. It localises to the melanosome. The enzyme catalyses Release of an N-terminal tripeptide from a polypeptide, but also has endopeptidase activity.. In terms of biological role, lysosomal serine protease with tripeptidyl-peptidase I activity. May act as a non-specific lysosomal peptidase which generates tripeptides from the breakdown products produced by lysosomal proteinases. Requires substrates with an unsubstituted N-terminus. This chain is Tripeptidyl-peptidase 1 (TPP1), found in Canis lupus familiaris (Dog).